A 409-amino-acid polypeptide reads, in one-letter code: Na(+)/H(+) antiporter NhaA (409 aa).

The next 11 membrane-spanning stretches (helical) occupy residues 13–33 (SGGI…NTFL), 58–78 (LILW…GLEL), 93–113 (IALP…IFYL), 120–140 (FALG…LGIL), 153–173 (IFLM…IALF), 176–196 (SELS…LFAL), 216–236 (VAVL…AFFI), 256–276 (LHGW…AGIS), 279–299 (GVGL…GLFV), 326–346 (FIQL…SLFI), and 363–383 (LAIL…LKFS).

Belongs to the NhaA Na(+)/H(+) (TC 2.A.33) antiporter family.

Its subcellular location is the cell inner membrane. It catalyses the reaction Na(+)(in) + 2 H(+)(out) = Na(+)(out) + 2 H(+)(in). Functionally, na(+)/H(+) antiporter that extrudes sodium in exchange for external protons. The polypeptide is Na(+)/H(+) antiporter NhaA (Campylobacter concisus (strain 13826)).